The chain runs to 528 residues: Calcium-dependent protein kinase 17 (528 aa).

A disordered region spans residues 1–65 (MGNCCSHGRD…GPIGPVLGRP (65 aa)). Gly2 carries N-myristoyl glycine lipidation. Over residues 20–45 (NGASASNAANSTGPTAEASVPQSKHA) the composition is skewed to low complexity. One can recognise a Protein kinase domain in the interval 73–331 (YSLGKELGRG…AAQVLNHPWI (259 aa)). ATP contacts are provided by residues 79-87 (LGRGQFGVT) and Lys102. Catalysis depends on Asp197, which acts as the Proton acceptor. A Phosphoserine modification is found at Ser237. Residues 337-367 (APDVPLDNAVMSRLKQFKAMNNFKKVALRVI) are autoinhibitory domain. EF-hand domains lie at 374 to 409 (EEIM…QGTR), 410 to 445 (LSEY…INRL), 446 to 481 (DREE…FGMN), and 485 to 516 (DIKE…GNPD). Residues Asp387, Asp389, Ser391, Thr393, Glu398, Asp423, Asp425, Asn427, Thr429, Glu434, Asp459, Asp461, Ser463, Tyr465, Glu470, Asp494, Asp496, Asp498, Arg500, and Glu505 each coordinate Ca(2+).

This sequence belongs to the protein kinase superfamily. Ser/Thr protein kinase family. CDPK subfamily.

Its subcellular location is the membrane. The enzyme catalyses L-seryl-[protein] + ATP = O-phospho-L-seryl-[protein] + ADP + H(+). The catalysed reaction is L-threonyl-[protein] + ATP = O-phospho-L-threonyl-[protein] + ADP + H(+). With respect to regulation, activated by calcium. Autophosphorylation may play an important role in the regulation of the kinase activity. May play a role in signal transduction pathways that involve calcium as a second messenger. This is Calcium-dependent protein kinase 17 (CPK17) from Arabidopsis thaliana (Mouse-ear cress).